Here is a 386-residue protein sequence, read N- to C-terminus: Histidine decarboxylase (386 aa).

His120 lines the substrate pocket. Position 233 is an N6-(pyridoxal phosphate)lysine (Lys233).

It belongs to the group II decarboxylase family. Homotetramer. Pyridoxal 5'-phosphate is required as a cofactor.

It catalyses the reaction L-histidine + H(+) = histamine + CO2. It functions in the pathway siderophore biosynthesis; anguibactin biosynthesis. The polypeptide is Histidine decarboxylase (Vibrio anguillarum (strain ATCC 68554 / 775) (Listonella anguillarum)).